A 74-amino-acid chain; its full sequence is Acyclotide phyb-K (74 aa).

The N-terminal stretch at 1–24 (MARVNSLKCALCFIVLILFVQLNC) is a signal peptide. Positions 25–43 (IPETRVMAVELSRVFLQTS) are excised as a propeptide. 3 disulfide bridges follow: Cys-47/Cys-64, Cys-51/Cys-66, and Cys-56/Cys-71.

In terms of processing, contains 3 disulfide bonds. Expressed in midvein, lamina and periphery of leaves (at protein level).

In terms of biological role, probably participates in a plant defense mechanism. This chain is Acyclotide phyb-K, found in Petunia hybrida (Petunia).